Reading from the N-terminus, the 364-residue chain is tRNA-specific 2-thiouridylase MnmA (364 aa).

ATP is bound by residues 6–13 and Leu32; that span reads AMSGGVDS. The active-site Nucleophile is the Cys101. Cysteines 101 and 193 form a disulfide. Gly125 is an ATP binding site. The interval 143–145 is interaction with tRNA; that stretch reads KDQ. Cys193 functions as the Cysteine persulfide intermediate in the catalytic mechanism.

This sequence belongs to the MnmA/TRMU family.

Its subcellular location is the cytoplasm. It carries out the reaction S-sulfanyl-L-cysteinyl-[protein] + uridine(34) in tRNA + AH2 + ATP = 2-thiouridine(34) in tRNA + L-cysteinyl-[protein] + A + AMP + diphosphate + H(+). Functionally, catalyzes the 2-thiolation of uridine at the wobble position (U34) of tRNA, leading to the formation of s(2)U34. This Rhodococcus jostii (strain RHA1) protein is tRNA-specific 2-thiouridylase MnmA.